The primary structure comprises 386 residues: L-prolyl-[peptidyl-carrier protein] dehydrogenase (386 aa).

FAD-binding positions include 125-134 (NAATEPDAGS) and 158-160 (FIT). The active-site Proton acceptor is Glu244. FAD contacts are provided by residues Arg270, Gln281, 338–342 (QTFGG), and 367–369 (TND).

It belongs to the acyl-CoA dehydrogenase family. FAD serves as cofactor.

The enzyme catalyses L-prolyl-[peptidyl-carrier protein] + 2 oxidized [electron-transfer flavoprotein] + H(+) = (1H-pyrrole-2-carbonyl)-[peptidyl-carrier protein] + 2 reduced [electron-transfer flavoprotein]. The protein operates within antibiotic biosynthesis; prodigiosin biosynthesis. Its function is as follows. Involved in the biosynthesis of 4-methoxy-2,2'-bipyrrole-5-carbaldehyde (MBC), one of the terminal products involved in the biosynthesis of the red antibiotic prodigiosin (Pig). Catalyzes the desaturation of the L-prolyl-[PigG] to yield 1H-pyrrole-2-carbonyl-[PigG]. The sequence is that of L-prolyl-[peptidyl-carrier protein] dehydrogenase from Serratia sp. (strain ATCC 39006) (Prodigiosinella confusarubida).